A 236-amino-acid polypeptide reads, in one-letter code: MSFIVEKINCNSLPLKRKTRFAAGHDVYTPYDVVFEVGQTEAKVYTNLVVKSVPEGCAIIVAGRSGLMHGNGMRAIDDEITVGSEDELIITLTRKTGLDKRVVLKSETRVAQIIADTTQDVKLVELPISTYGLDVNHGDVPVYKFNTHWRLEAMPWLRDYQGNRNEVYLRLKSEHFNGIIDPDYKGDIIYMSETPFERLDELYVEVRQFSGETYLGGESPDNVVRGEGGFGSTGGH.

The interval 217–236 (GESPDNVVRGEGGFGSTGGH) is disordered. A compositionally biased stretch (gly residues) spans 226-236 (GEGGFGSTGGH).

This is an uncharacterized protein from Ostreid herpesvirus 1 (isolate France) (OsHV-1).